Reading from the N-terminus, the 795-residue chain is Delta-1-pyrroline-5-carboxylate synthase (795 aa).

The tract at residues 1–361 is glutamate 5-kinase; that stretch reads MLSQVYRCGF…FFSEVKPAGP (361 aa). The substrate site is built by serine 117, aspartate 223, and asparagine 246. ATP is bound by residues 266 to 267 and 305 to 311; these read SD and MGGMEAK. N6-succinyllysine is present on residues lysine 311, lysine 347, and lysine 550. The interval 362–795 is gamma-glutamyl phosphate reductase; the sequence is TVEQQGEMAR…NLPIPQRNTN (434 aa).

This sequence in the N-terminal section; belongs to the glutamate 5-kinase family. It in the C-terminal section; belongs to the gamma-glutamyl phosphate reductase family. Can form homodimers/multimers.

Its subcellular location is the mitochondrion. It is found in the mitochondrion matrix. It carries out the reaction L-glutamate + ATP = L-glutamyl 5-phosphate + ADP. The enzyme catalyses L-glutamate 5-semialdehyde + phosphate + NADP(+) = L-glutamyl 5-phosphate + NADPH + H(+). It participates in amino-acid biosynthesis; L-proline biosynthesis; L-glutamate 5-semialdehyde from L-glutamate: step 1/2. The protein operates within amino-acid biosynthesis; L-proline biosynthesis; L-glutamate 5-semialdehyde from L-glutamate: step 2/2. With respect to regulation, isoform Short: Inhibited by L-ornithine with a Ki of approximately 0.25 mm. Isoform Long: Insensitive to ornithine inhibition. This is due to the two amino acid insert which abolishes feedback inhibition of P5CS activity by L-ornithine. In terms of biological role, bifunctional enzyme that converts glutamate to glutamate 5-semialdehyde, an intermediate in the biosynthesis of proline, ornithine and arginine. This is Delta-1-pyrroline-5-carboxylate synthase (ALDH18A1) from Homo sapiens (Human).